The following is a 288-amino-acid chain: Protoheme IX farnesyltransferase (288 aa).

9 helical membrane passes run 8 to 28, 35 to 55, 75 to 95, 105 to 125, 130 to 150, 161 to 181, 205 to 225, 230 to 250, and 265 to 285; these read IIKP…FLLA, VNLF…ASIF, IAIG…LLIL, FLTI…YSLL, SVYS…IGYC, FILL…IGLV, INII…FFAG, NYLF…IKGF, and IFLF…IDYK.

Belongs to the UbiA prenyltransferase family. Protoheme IX farnesyltransferase subfamily.

The protein resides in the cell membrane. It catalyses the reaction heme b + (2E,6E)-farnesyl diphosphate + H2O = Fe(II)-heme o + diphosphate. Its pathway is porphyrin-containing compound metabolism; heme O biosynthesis; heme O from protoheme: step 1/1. Converts heme B (protoheme IX) to heme O by substitution of the vinyl group on carbon 2 of heme B porphyrin ring with a hydroxyethyl farnesyl side group. In Wigglesworthia glossinidia brevipalpis, this protein is Protoheme IX farnesyltransferase.